We begin with the raw amino-acid sequence, 181 residues long: Transcription termination/antitermination protein NusG (181 aa).

The region spanning 130-161 (PGEMVRVNDGPFADFNGVVEEVDYEKSRLKVS) is the KOW domain.

It belongs to the NusG family. Monomer. Interacts with the transcription termination factor Rho and with RNA polymerase.

Participates in transcription elongation, termination and antitermination. In the absence of Rho, increases the rate of transcription elongation by the RNA polymerase (RNAP), probably by partially suppressing pausing. In the presence of Rho, modulates most Rho-dependent termination events by interacting with the RNAP to render the complex more susceptible to the termination activity of Rho. May be required to overcome a kinetic limitation of Rho to function at certain terminators. Also involved in ribosomal RNA transcriptional antitermination. The chain is Transcription termination/antitermination protein NusG from Salmonella typhi.